Here is a 701-residue protein sequence, read N- to C-terminus: MTVRNILVTSALPYANGSIHLGHLVEYIQTDIWVRFQKMQGHTVYYVCADDAHGTPIMLRAEREGISPEALIARVYTEHLRDFTGFHIAFDQYYSTHSDETRYYAEDIYQKLKAAGLIAIRSIEQLYDPVKNLFLPDRFVKGECPKCGAVDQYGDSCEACGAAYTPTELKNPYSAISGATPIRKASEHFFFKLSDPRCSDFLRKWTRSGNHLQVEAANKMAEWLGEEGENKLSDWDISRDAPYFGFEIPGETDKYFYVWLDAPIGYMGSFKKLCTEQGIDFDQYWKKGATTELYHFIGKDILYFHALFWPAMLENAGYRTPTQIFAHGFLTVNGEKMSKSRGTFITAESYLQQRLNPEWLRYYYAAKLNGSMEDIDLNLEDFVTRVNADLVGKYINIASRCAGFISKCFDGKLVAGEDYQLLQQTVDEYFSSWQPGVIEAAYEARDFSAAIRHIMKRTDEVNELIHVLAPWEIAKDETRERELHRACSLGIQMFYLLSCYLKPVLPYTAERIEHFLNWMALGWPRQQAGQPLSTMLLPAGHTINTYQHLITRIDPKQIAALTEANRQTMTTSNDTHSLTRHAEAQQRVIAPIAETISIEDFSKIDLRIARILDAQHVPGADKLLQLTLDIGSEQRSVFAGIKSAYDPEQLKGRLTVMVANLAPRKMKFGLSEGMVLAASGESGGPFLLAPDSGAQPGMRVK.

The short motif at 13 to 23 is the 'HIGH' region element; the sequence is PYANGSIHLGH. Zn(2+) is bound by residues cysteine 144, cysteine 147, cysteine 157, and cysteine 160. A 'KMSKS' region motif is present at residues 336 to 340; it reads KMSKS. ATP is bound at residue lysine 339. One can recognise a tRNA-binding domain in the interval 600-701; that stretch reads DFSKIDLRIA…SGAQPGMRVK (102 aa).

This sequence belongs to the class-I aminoacyl-tRNA synthetase family. MetG type 1 subfamily. Homodimer. The cofactor is Zn(2+).

The protein localises to the cytoplasm. It catalyses the reaction tRNA(Met) + L-methionine + ATP = L-methionyl-tRNA(Met) + AMP + diphosphate. Is required not only for elongation of protein synthesis but also for the initiation of all mRNA translation through initiator tRNA(fMet) aminoacylation. The protein is Methionine--tRNA ligase of Nitrosomonas eutropha (strain DSM 101675 / C91 / Nm57).